The primary structure comprises 319 residues: MKRSLILGIGSYLPKKVVTNDELTLTIETSDEWIVKRTGIKQRHIAEDNEMTSDMATSAAKLALDNAGIDKNEIDLIIVATTTPDRTFPSCATIVQSKLGCKNAFAFDIQAVCSGFVYALSIADNFIKSGQVRTVLVIGAEIMSRILDWQDRSTCVLFGDGAGAIVLSSSTEDDSGIISTNLHSDGTFHDLLYTSGGTAYNGVAGTICMNGTVVFEHAIEKLSASILEILSQNDLEICDIDWFVLHQANIRIIELVARRLKIPYEKMIVSIDQHANTSAASIPLALYYARSSGKLKKHDVAVLAAIGGGLTWGTCLVRI.

Residues Cys113 and His246 contribute to the active site. The interval 247–251 is ACP-binding; the sequence is QANIR. Asn276 is an active-site residue.

It belongs to the thiolase-like superfamily. FabH family. As to quaternary structure, homodimer.

The protein resides in the cytoplasm. The catalysed reaction is malonyl-[ACP] + acetyl-CoA + H(+) = 3-oxobutanoyl-[ACP] + CO2 + CoA. The protein operates within lipid metabolism; fatty acid biosynthesis. Functionally, catalyzes the condensation reaction of fatty acid synthesis by the addition to an acyl acceptor of two carbons from malonyl-ACP. Catalyzes the first condensation reaction which initiates fatty acid synthesis and may therefore play a role in governing the total rate of fatty acid production. Possesses both acetoacetyl-ACP synthase and acetyl transacylase activities. Its substrate specificity determines the biosynthesis of branched-chain and/or straight-chain of fatty acids. The polypeptide is Beta-ketoacyl-[acyl-carrier-protein] synthase III (Ehrlichia canis (strain Jake)).